A 164-amino-acid polypeptide reads, in one-letter code: UPF0114 protein Sbal223_3668 (164 aa).

4 helical membrane-spanning segments follow: residues 15–35 (IMAP…IKFF), 53–73 (LVLV…IVMV), 108–128 (KVAA…FMDV), and 136–156 (IMWY…MGYL).

Belongs to the UPF0114 family.

The protein resides in the cell membrane. This Shewanella baltica (strain OS223) protein is UPF0114 protein Sbal223_3668.